The primary structure comprises 213 residues: Thiamine-phosphate synthase (213 aa).

Residues 40–44 (QFREK) and N75 each bind 4-amino-2-methyl-5-(diphosphooxymethyl)pyrimidine. The Mg(2+) site is built by D76 and D95. S113 contacts 4-amino-2-methyl-5-(diphosphooxymethyl)pyrimidine. 139 to 141 (TPS) is a 2-[(2R,5Z)-2-carboxy-4-methylthiazol-5(2H)-ylidene]ethyl phosphate binding site. A 4-amino-2-methyl-5-(diphosphooxymethyl)pyrimidine-binding site is contributed by K142. 2-[(2R,5Z)-2-carboxy-4-methylthiazol-5(2H)-ylidene]ethyl phosphate contacts are provided by residues G171 and 191–192 (IS).

This sequence belongs to the thiamine-phosphate synthase family. The cofactor is Mg(2+).

The catalysed reaction is 2-[(2R,5Z)-2-carboxy-4-methylthiazol-5(2H)-ylidene]ethyl phosphate + 4-amino-2-methyl-5-(diphosphooxymethyl)pyrimidine + 2 H(+) = thiamine phosphate + CO2 + diphosphate. The enzyme catalyses 2-(2-carboxy-4-methylthiazol-5-yl)ethyl phosphate + 4-amino-2-methyl-5-(diphosphooxymethyl)pyrimidine + 2 H(+) = thiamine phosphate + CO2 + diphosphate. It catalyses the reaction 4-methyl-5-(2-phosphooxyethyl)-thiazole + 4-amino-2-methyl-5-(diphosphooxymethyl)pyrimidine + H(+) = thiamine phosphate + diphosphate. Its pathway is cofactor biosynthesis; thiamine diphosphate biosynthesis; thiamine phosphate from 4-amino-2-methyl-5-diphosphomethylpyrimidine and 4-methyl-5-(2-phosphoethyl)-thiazole: step 1/1. Its function is as follows. Condenses 4-methyl-5-(beta-hydroxyethyl)thiazole monophosphate (THZ-P) and 2-methyl-4-amino-5-hydroxymethyl pyrimidine pyrophosphate (HMP-PP) to form thiamine monophosphate (TMP). This is Thiamine-phosphate synthase from Staphylococcus aureus (strain MRSA252).